We begin with the raw amino-acid sequence, 410 residues long: Lissencephaly-1 homolog (410 aa).

A LisH domain is found at 7 to 39 (QRDELNRAIADYLRSNGYEEAYSVFKKEAELDV). A coiled-coil region spans residues 56 to 82 (TSVIRLQKKVMELESKLNEAKEEFTSG). WD repeat units follow at residues 106-147 (GHRS…RTLK), 148-187 (GHTD…CIRT), 190-229 (GHDH…CVKT), 232-271 (GHRE…CKAE), 274-333 (EHEH…CLMT), 336-377 (GHDN…KTLN), and 378-410 (AHEH…WECR).

Belongs to the WD repeat LIS1/nudF family. Can self-associate. Component of the cytosolic PAF-AH (I) heterotetrameric enzyme, which is composed of PAFAH1B1 (beta), PAFAH1B2 (alpha2) and PAFAH1B3 (alpha1) subunits. The catalytic activity of the enzyme resides in the alpha1 (PAFAH1B3) and alpha2 (PAFAH1B2) subunits, whereas the beta subunit (PAFAH1B1) has regulatory activity. Trimer formation is not essential for the catalytic activity. Interacts with dynein, dynactin, NDE1 and NDEL1.

Its subcellular location is the cytoplasm. The protein localises to the cytoskeleton. It is found in the microtubule organizing center. The protein resides in the centrosome. Regulatory subunit (beta subunit) of the cytosolic type I platelet-activating factor (PAF) acetylhydrolase (PAF-AH (I)), an enzyme that catalyzes the hydrolyze of the acetyl group at the sn-2 position of PAF and its analogs and participates in PAF inactivation. Regulates the PAF-AH (I) activity in a catalytic dimer composition-dependent manner. Positively regulates the activity of the minus-end directed microtubule motor protein dynein. May enhance dynein-mediated microtubule sliding by targeting dynein to the microtubule plus end. Required for several dynein- and microtubule-dependent processes such as the maintenance of Golgi integrity, the peripheral transport of microtubule fragments and the coupling of the nucleus and centrosome. May be required for proliferation of neuronal precursors and neuronal migration. The sequence is that of Lissencephaly-1 homolog from Gallus gallus (Chicken).